The sequence spans 286 residues: Pantothenate synthetase (286 aa).

Position 30–37 (30–37) interacts with ATP; the sequence is MGYFHEGH. Catalysis depends on His-37, which acts as the Proton donor. Gln-61 contacts (R)-pantoate. Gln-61 is a beta-alanine binding site. 147-150 contacts ATP; that stretch reads GKKD. (R)-pantoate is bound at residue Gln-153. 184–187 is a binding site for ATP; it reads MSSR.

It belongs to the pantothenate synthetase family. In terms of assembly, homodimer.

The protein resides in the cytoplasm. It catalyses the reaction (R)-pantoate + beta-alanine + ATP = (R)-pantothenate + AMP + diphosphate + H(+). Its pathway is cofactor biosynthesis; (R)-pantothenate biosynthesis; (R)-pantothenate from (R)-pantoate and beta-alanine: step 1/1. In terms of biological role, catalyzes the condensation of pantoate with beta-alanine in an ATP-dependent reaction via a pantoyl-adenylate intermediate. This Syntrophus aciditrophicus (strain SB) protein is Pantothenate synthetase.